Consider the following 196-residue polypeptide: Endonuclease V (196 aa).

Positions 37 and 98 each coordinate Mg(2+).

The protein belongs to the endonuclease V family. Requires Mg(2+) as cofactor.

Its subcellular location is the cytoplasm. The enzyme catalyses Endonucleolytic cleavage at apurinic or apyrimidinic sites to products with a 5'-phosphate.. Its function is as follows. DNA repair enzyme involved in the repair of deaminated bases. Selectively cleaves double-stranded DNA at the second phosphodiester bond 3' to a deoxyinosine leaving behind the intact lesion on the nicked DNA. The protein is Endonuclease V of Sulfurisphaera tokodaii (strain DSM 16993 / JCM 10545 / NBRC 100140 / 7) (Sulfolobus tokodaii).